The primary structure comprises 341 residues: Nucleoid-associated protein Sden_2335 (341 aa).

This sequence belongs to the YejK family.

The protein localises to the cytoplasm. It localises to the nucleoid. The polypeptide is Nucleoid-associated protein Sden_2335 (Shewanella denitrificans (strain OS217 / ATCC BAA-1090 / DSM 15013)).